The following is an 858-amino-acid chain: DNA mismatch repair protein MutS (858 aa).

ATP is bound at residue 637-644; that stretch reads GPNMAGKS.

This sequence belongs to the DNA mismatch repair MutS family.

Its function is as follows. This protein is involved in the repair of mismatches in DNA. It is possible that it carries out the mismatch recognition step. This protein has a weak ATPase activity. The protein is DNA mismatch repair protein MutS of Protochlamydia amoebophila (strain UWE25).